We begin with the raw amino-acid sequence, 362 residues long: MSRPQVTVHSLTGEATANALPLPAVFSAPIRPDIVHTVFTSVNKNKRQAYAVSEKAGHQTSAESWGTGRAVARIPRVGGGGTGRSGQGAFGNMCRGGRMFAPTKTWRKWNVKVNHNEKRYATASAIAATAVASLVLARGHRVEKIPEIPLVVSTDLESIQKTKEAVAALKAVGAHSDLLKVLKSKKLRAGKGKYRNRRWTQRRGPLVVYAEDNGIVKALRNVPGVETANVASLNLLQLAPGAHLGRFVIWTEAAFTKLDQVWGSETVASSKVGYTLPSHIISTSDVTRIINSSEIQSAIRPAGQATQKRTHVLKKNPLKNKQVLLRLNPYAKVFAAEKLGSKKAEKTGTKPAAVFTETLKHD.

Position 2 is an N-acetylserine (Ser-2). The residue at position 95 (Arg-95) is an Omega-N-methylarginine. The C-terminal-extended nuclear localization signal stretch occupies residues 277–362 (PSHIISTSDV…AVFTETLKHD (86 aa)).

This sequence belongs to the universal ribosomal protein uL4 family. Component of the large ribosomal subunit (LSU). Mature yeast ribosomes consist of a small (40S) and a large (60S) subunit. The 40S small subunit contains 1 molecule of ribosomal RNA (18S rRNA) and 33 different proteins (encoded by 57 genes). The large 60S subunit contains 3 rRNA molecules (25S, 5.8S and 5S rRNA) and 46 different proteins (encoded by 81 genes). uL4 is associated with the polypeptide exit tunnel. uL4 interacts with its chaperone ACL4 and the nuclear import receptor KAP104. In terms of processing, N-terminally acetylated by acetyltransferase NatA.

Its subcellular location is the cytoplasm. It is found in the nucleus. In terms of biological role, component of the ribosome, a large ribonucleoprotein complex responsible for the synthesis of proteins in the cell. The small ribosomal subunit (SSU) binds messenger RNAs (mRNAs) and translates the encoded message by selecting cognate aminoacyl-transfer RNA (tRNA) molecules. The large subunit (LSU) contains the ribosomal catalytic site termed the peptidyl transferase center (PTC), which catalyzes the formation of peptide bonds, thereby polymerizing the amino acids delivered by tRNAs into a polypeptide chain. The nascent polypeptides leave the ribosome through a tunnel in the LSU and interact with protein factors that function in enzymatic processing, targeting, and the membrane insertion of nascent chains at the exit of the ribosomal tunnel. uL4 participates in the regulation of the accumulation of its own mRNA. This chain is Large ribosomal subunit protein uL4A, found in Saccharomyces cerevisiae (strain ATCC 204508 / S288c) (Baker's yeast).